We begin with the raw amino-acid sequence, 125 residues long: Small ribosomal subunit protein uS13 (125 aa).

Residues 94–125 (SLPVRGQRTRTNARTRKGKRKTVAGKKKAVKK) form a disordered region.

This sequence belongs to the universal ribosomal protein uS13 family. Part of the 30S ribosomal subunit. Forms a loose heterodimer with protein S19. Forms two bridges to the 50S subunit in the 70S ribosome.

In terms of biological role, located at the top of the head of the 30S subunit, it contacts several helices of the 16S rRNA. In the 70S ribosome it contacts the 23S rRNA (bridge B1a) and protein L5 of the 50S subunit (bridge B1b), connecting the 2 subunits; these bridges are implicated in subunit movement. Contacts the tRNAs in the A and P-sites. In Chlorobium chlorochromatii (strain CaD3), this protein is Small ribosomal subunit protein uS13.